The chain runs to 570 residues: NADPH oxidase 2 (570 aa).

At 2–9 the chain is on the cytoplasmic side; sequence GNWAVNEG. Residues 10 to 36 form a helical membrane-spanning segment; the sequence is LSIFVILVWLGLNVFLFVWYYRVYDIP. The Extracellular segment spans residues 37–46; the sequence is PKFFYTRKLL. Residues 47–72 traverse the membrane as a helical segment; that stretch reads GSALALARAPAACLNFNCMLILLPVC. One can recognise a Ferric oxidoreductase domain in the interval 54–286; the sequence is RAPAACLNFN…MFLYLCERLV (233 aa). At 73 to 95 the chain is on the cytoplasmic side; sequence RNLLSFLRGSSACCSTRVRRQLD. Residues 96-130 form a helical membrane-spanning segment; sequence RNLTFHKMVAWMIALHSAIHTIAHLFNVEWCVNAR. H101 and H115 together coordinate heme b. At 131 to 163 the chain is on the extracellular side; the sequence is VNNSDPYSVALSELGDRQNESYLNFARKRIKNP. N132 and N149 each carry an N-linked (GlcNAc...) asparagine glycan. A Glycyl lysine isopeptide (Lys-Gly) (interchain with G-Cter in ubiquitin) cross-link involves residue K161. The helical transmembrane segment at 164–194 threads the bilayer; it reads EGGLYLAVTLLAGITGVVITLCLILIITSST. Over 195–203 the chain is Cytoplasmic; the sequence is KTIRRSYFE. The FAD site is built by R199 and S200. A helical membrane pass occupies residues 204–222; that stretch reads VFWYTHHLFVIFFIGLAIH. W206, H209, H222, R226, and I227 together coordinate heme b. Residues 223 to 267 lie on the Extracellular side of the membrane; that stretch reads GAERIVRGQTAESLAVHNITVCEQKISEWGKIKECPIPQFAGNPP. N240 is a glycosylation site (N-linked (GlcNAc...) asparagine). A Glycyl lysine isopeptide (Lys-Gly) (interchain with G-Cter in ubiquitin) cross-link involves residue K255. The heme b site is built by M268, Y280, and R287. Residues 268 to 285 form a helical membrane-spanning segment; it reads MTWKWIVGPMFLYLCERL. Residues 286 to 570 are Cytoplasmic-facing; sequence VRFWRSQQKV…VHFIFNKENF (285 aa). Residues 287–397 enclose the FAD-binding FR-type domain; that stretch reads RFWRSQQKVV…DGPFGTASED (111 aa). Glycyl lysine isopeptide (Lys-Gly) (interchain with G-Cter in ubiquitin) cross-links involve residues K294, K299, K306, K328, and K334. The FAD site is built by W337, H338, P339, T341, H354, R356, W361, and T362. Residue K381 forms a Glycyl lysine isopeptide (Lys-Gly) (interchain with G-Cter in ubiquitin) linkage. Positions 411, 446, and 481 each coordinate NADPH. K506 is covalently cross-linked (Glycyl lysine isopeptide (Lys-Gly) (interchain with G-Cter in ubiquitin)). R513 lines the NADPH pocket. A Glycyl lysine isopeptide (Lys-Gly) (interchain with G-Cter in ubiquitin) cross-link involves residue K567.

As to quaternary structure, component of the phagocyte NADPH oxidase core complex/cytochrome b558 complex, composed of CYBB (heavy chain (beta)) and CYBA (light chain (alpha)). Component of the phagocyte NADPH oxidase complex composed of an obligatory core heterodimer formed by the membrane proteins CYBA and CYBB and the cytosolic regulatory subunits NCF1/p47-phox, NCF2/p67-phox, NCF4/p40-phox and the small GTPase RAC1 or RAC2. Interacts with NCF1 (phosphorylated form). Interacts with NCF2; the interaction is enhanced in the presence of GBP7. Interacts with RAC2. Interacts with RAC1. Interacts with calprotectin (S100A8/9). Interacts with NRROS; the interaction is direct and impairs formation of a stable NADPH oxidase complex. Interacts with CYBC1; CYBC1 may act as a chaperone stabilizing Cytochrome b-245 heterodimer. The CYBA-CYBB complex interacts with GBP7. The cofactor is FAD. In terms of processing, glycosylated. Post-translationally, phosphorylated on Ser and Thr residues by PKC during neutrophils activation. Phosphorylation enhances the NADPH oxidase activity and stimulates its interaction with RAC2, NCF2/p67-phox, and NCF1/p47-phox. Undergoes 'Lys-48'-linked polyubiquitination, likely by RNF145, triggering endoplasmic reticulum-associated degradation. Detected in neutrophils (at protein level).

It is found in the cell membrane. The catalysed reaction is NADPH + 2 O2 = 2 superoxide + NADP(+) + H(+). In terms of biological role, catalytic subunit of the phagocyte NADPH oxidase complex that mediates the transfer of electrons from cytosolic NADPH to O2 to produce the superoxide anion (O2(-)). In the activated complex, electrons are first transferred from NADPH to flavin adenine dinucleotide (FAD) and subsequently transferred via two heme molecules to molecular oxygen, producing superoxide through an outer-sphere reaction. Activation of the NADPH oxidase complex is initiated by the assembly of cytosolic subunits of the NADPH oxidase complex with the core NADPH oxidase complex to form a complex at the plasma membrane or phagosomal membrane. This activation process is initiated by phosphorylation dependent binding of the cytosolic NCF1/p47-phox subunit to the C-terminus of CYBA/p22-phox. NADPH oxidase complex assembly is impaired through interaction with NRROS. The polypeptide is NADPH oxidase 2 (Homo sapiens (Human)).